The chain runs to 74 residues: uncharacterized protein (74 aa).

Disordered regions lie at residues 1–26 (MNGP…SGVF) and 46–74 (ITNS…SFTQ). A helical transmembrane segment spans residues 34 to 50 (VSNKSIMLISLKITNSP). Residues 47-74 (TNSPNSNSRGSSSSSSTSKSSSKTSFTQ) show a composition bias toward low complexity.

Its subcellular location is the membrane. This is an uncharacterized protein from Dictyostelium discoideum (Social amoeba).